We begin with the raw amino-acid sequence, 122 residues long: Small ribosomal subunit protein uS13 (122 aa).

Residues 94–122 (RGLPVRGQKTKTNARTRKGPRKTVAGKRK) are disordered.

The protein belongs to the universal ribosomal protein uS13 family. In terms of assembly, part of the 30S ribosomal subunit. Forms a loose heterodimer with protein S19. Forms two bridges to the 50S subunit in the 70S ribosome.

Its function is as follows. Located at the top of the head of the 30S subunit, it contacts several helices of the 16S rRNA. In the 70S ribosome it contacts the 23S rRNA (bridge B1a) and protein L5 of the 50S subunit (bridge B1b), connecting the 2 subunits; these bridges are implicated in subunit movement. Contacts the tRNAs in the A and P-sites. This is Small ribosomal subunit protein uS13 from Syntrophotalea carbinolica (strain DSM 2380 / NBRC 103641 / GraBd1) (Pelobacter carbinolicus).